Consider the following 329-residue polypeptide: Telomeric repeat-binding factor 2-interacting protein 1 (329 aa).

The 24-residue stretch at 63–86 (AVSTDYVVACVESQRRLPLDLYRH) folds into the BRCT domain. The region spanning 94–153 (ASPRGRLPFTEAEDAALLRAVRERSGAPRVSGTALWKELECTGLTRHSWQAMRDRYLRHL) is the Myb-like domain. The interval 179 to 206 (EFESSESGSDTSDTPDELPLQNGEGTFP) is disordered. The Nuclear localization signal motif lies at 313–329 (AKFGAENVARRVAFRKS).

It belongs to the RAP1 family. As to quaternary structure, homodimer. Component of the shelterin complex (telosome). Interacts with terf2; the interaction is direct.

It localises to the nucleus. It is found in the chromosome. The protein resides in the telomere. Acts both as a regulator of telomere function and as a transcription regulator. Involved in the regulation of telomere length and protection as a component of the shelterin complex (telosome). Does not bind DNA directly: recruited to telomeric double-stranded 5'-TTAGGG-3' repeats via its interaction with terf2. Independently of its function in telomeres, also acts as a transcription regulator: recruited to extratelomeric 5'-TTAGGG-3' sites via its association with terf2 or other factors, and regulates gene expression. The chain is Telomeric repeat-binding factor 2-interacting protein 1 (TERF2IP) from Gallus gallus (Chicken).